Consider the following 349-residue polypeptide: UPF0283 membrane protein Ent638_2153 (349 aa).

Helical transmembrane passes span 70–90 (MVTAGLTLFGISVVGQGVQWT), 99–119 (WVALGGCAAGALIIGAGVGSV), and 213–233 (ESTLMIAVSPLALVDMAFIAW).

The protein belongs to the UPF0283 family.

It is found in the cell inner membrane. This Enterobacter sp. (strain 638) protein is UPF0283 membrane protein Ent638_2153.